We begin with the raw amino-acid sequence, 212 residues long: Interleukin-6 (212 aa).

The first 29 residues, 1–29 (MNSLSTSAFSPVAFSLGLLLVMATAFPTP), serve as a signal peptide directing secretion. Cysteine 72 and cysteine 78 are oxidised to a cystine. Serine 81 carries the phosphoserine modification. Cysteine 101 and cysteine 111 are disulfide-bonded. The tract at residues 156–175 (QKGKNPDKATTPNPTTNAGL) is disordered. Polar residues predominate over residues 163-175 (KATTPNPTTNAGL).

Belongs to the IL-6 superfamily. Component of a hexamer of two molecules each of IL6, IL6R and IL6ST; first binds to IL6R to associate with the signaling subunit IL6ST. Interacts with IL6R (via the N-terminal ectodomain); this interaction may be affected by IL6R-binding with SORL1, hence decreasing IL6 cis signaling. Interacts with SORL1 (via the N-terminal ectodomain); this interaction leads to IL6 internalization and lysosomal degradation. May form a trimeric complex with the soluble SORL1 ectodomain and soluble IL6R receptor; this interaction might stabilize circulating IL6, hence promoting IL6 trans signaling.

It is found in the secreted. Cytokine with a wide variety of biological functions in immunity, tissue regeneration, and metabolism. Binds to IL6R, then the complex associates to the signaling subunit IL6ST/gp130 to trigger the intracellular IL6-signaling pathway. The interaction with the membrane-bound IL6R and IL6ST stimulates 'classic signaling', whereas the binding of IL6 and soluble IL6R to IL6ST stimulates 'trans-signaling'. Alternatively, 'cluster signaling' occurs when membrane-bound IL6:IL6R complexes on transmitter cells activate IL6ST receptors on neighboring receiver cells. In terms of biological role, IL6 is a potent inducer of the acute phase response. Rapid production of IL6 contributes to host defense during infection and tissue injury, but excessive IL6 synthesis is involved in disease pathology. In the innate immune response, is synthesized by myeloid cells, such as macrophages and dendritic cells, upon recognition of pathogens through toll-like receptors (TLRs) at the site of infection or tissue injury. In the adaptive immune response, is required for the differentiation of B cells into immunoglobulin-secreting cells. Plays a major role in the differentiation of CD4(+) T cell subsets. Essential factor for the development of T follicular helper (Tfh) cells that are required for the induction of germinal-center formation. Required to drive naive CD4(+) T cells to the Th17 lineage. Also required for proliferation of myeloma cells and the survival of plasmablast cells. Functionally, acts as an essential factor in bone homeostasis and on vessels directly or indirectly by induction of VEGF, resulting in increased angiogenesis activity and vascular permeability. Induces, through 'trans-signaling' and synergistically with IL1B and TNF, the production of VEGF. Involved in metabolic controls, is discharged into the bloodstream after muscle contraction increasing lipolysis and improving insulin resistance. 'Trans-signaling' in central nervous system also regulates energy and glucose homeostasis. Mediates, through GLP-1, crosstalk between insulin-sensitive tissues, intestinal L cells and pancreatic islets to adapt to changes in insulin demand. Also acts as a myokine. Plays a protective role during liver injury, being required for maintenance of tissue regeneration. Also has a pivotal role in iron metabolism by regulating HAMP/hepcidin expression upon inflammation or bacterial infection. Through activation of IL6ST-YAP-NOTCH pathway, induces inflammation-induced epithelial regeneration. This is Interleukin-6 (IL6) from Sus scrofa (Pig).